The primary structure comprises 289 residues: F-box protein PP2-B15 (289 aa).

An F-box domain is found at 1–43; sequence MMLPEACVATILSFTTPADTISSAAVSSVFRVAGDSDFVWEKF.

The chain is F-box protein PP2-B15 (PP2B15) from Arabidopsis thaliana (Mouse-ear cress).